We begin with the raw amino-acid sequence, 191 residues long: PBAN-type neuropeptides (191 aa).

An N-terminal signal peptide occupies residues 1–17 (MFSPLLFFAVSISCVLA). A Leucine amide modification is found at Leu-44. A propeptide spanning residues 48–91 (SLRISTEDNRQAFFKLLEAADALKYYYDRLPYEMQADEPETRVT) is cleaved from the precursor. A leucine amide mark is found at Leu-100, Leu-120, Leu-156, and Leu-166. Residues 169–191 (ELSYDMLPSKLRLVRSTNRTQST) constitute a propeptide that is removed on maturation.

It belongs to the pyrokinin family. Expressed in the subesophageal ganglion.

It is found in the secreted. Functionally, a hormone that controls sex pheromone production in females and pheromone responsiveness in male. In Spodoptera littoralis (Egyptian cotton leafworm), this protein is PBAN-type neuropeptides.